Here is a 426-residue protein sequence, read N- to C-terminus: Serine--tRNA ligase (426 aa).

233 to 235 (TAE) is a binding site for L-serine. Position 264 to 266 (264 to 266 (RSE)) interacts with ATP. Residue E287 coordinates L-serine. ATP is bound at residue 351–354 (EISS). S387 is an L-serine binding site.

This sequence belongs to the class-II aminoacyl-tRNA synthetase family. Type-1 seryl-tRNA synthetase subfamily. As to quaternary structure, homodimer. The tRNA molecule binds across the dimer.

It localises to the cytoplasm. It carries out the reaction tRNA(Ser) + L-serine + ATP = L-seryl-tRNA(Ser) + AMP + diphosphate + H(+). The enzyme catalyses tRNA(Sec) + L-serine + ATP = L-seryl-tRNA(Sec) + AMP + diphosphate + H(+). It functions in the pathway aminoacyl-tRNA biosynthesis; selenocysteinyl-tRNA(Sec) biosynthesis; L-seryl-tRNA(Sec) from L-serine and tRNA(Sec): step 1/1. Functionally, catalyzes the attachment of serine to tRNA(Ser). Is also able to aminoacylate tRNA(Sec) with serine, to form the misacylated tRNA L-seryl-tRNA(Sec), which will be further converted into selenocysteinyl-tRNA(Sec). In Clostridium botulinum (strain Hall / ATCC 3502 / NCTC 13319 / Type A), this protein is Serine--tRNA ligase.